The following is a 78-amino-acid chain: Large ribosomal subunit protein bL28 (78 aa).

The protein belongs to the bacterial ribosomal protein bL28 family.

In Treponema pallidum (strain Nichols), this protein is Large ribosomal subunit protein bL28 (rpmB).